A 287-amino-acid chain; its full sequence is Bifunctional protein FolD (287 aa).

NADP(+) is bound by residues 166-168 and I232; that span reads GAS.

The protein belongs to the tetrahydrofolate dehydrogenase/cyclohydrolase family. As to quaternary structure, homodimer.

It carries out the reaction (6R)-5,10-methylene-5,6,7,8-tetrahydrofolate + NADP(+) = (6R)-5,10-methenyltetrahydrofolate + NADPH. The enzyme catalyses (6R)-5,10-methenyltetrahydrofolate + H2O = (6R)-10-formyltetrahydrofolate + H(+). The protein operates within one-carbon metabolism; tetrahydrofolate interconversion. Functionally, catalyzes the oxidation of 5,10-methylenetetrahydrofolate to 5,10-methenyltetrahydrofolate and then the hydrolysis of 5,10-methenyltetrahydrofolate to 10-formyltetrahydrofolate. This Pectobacterium atrosepticum (strain SCRI 1043 / ATCC BAA-672) (Erwinia carotovora subsp. atroseptica) protein is Bifunctional protein FolD.